The primary structure comprises 1370 residues: DNA polymerase II large subunit (1370 aa).

2 disordered regions span residues 279–317 (IGAD…PRAA) and 1041–1081 (AGDA…DGGS).

This sequence belongs to the archaeal DNA polymerase II family. In terms of assembly, heterodimer of a large subunit and a small subunit. In terms of processing, this protein undergoes a protein self splicing that involves a post-translational excision of the intervening region (intein) followed by peptide ligation.

It carries out the reaction DNA(n) + a 2'-deoxyribonucleoside 5'-triphosphate = DNA(n+1) + diphosphate. It catalyses the reaction Exonucleolytic cleavage in the 3'- to 5'-direction to yield nucleoside 5'-phosphates.. Possesses two activities: a DNA synthesis (polymerase) and an exonucleolytic activity that degrades single-stranded DNA in the 3'- to 5'-direction. Has a template-primer preference which is characteristic of a replicative DNA polymerase. The chain is DNA polymerase II large subunit (polC) from Halobacterium salinarum (strain ATCC 700922 / JCM 11081 / NRC-1) (Halobacterium halobium).